The following is a 414-amino-acid chain: Small ribosomal subunit protein mS46 (414 aa).

Residues 20–35 (LNAQQQQRPFSSTTTR) are compositionally biased toward polar residues. Disordered regions lie at residues 20-71 (LNAQ…EAAV) and 168-229 (AGPG…DAPP). Low complexity-rich tracts occupy residues 45–59 (PAAA…APGP) and 168–200 (AGPG…PFGA). Residues 205 to 224 (PAGDKKRSGGSGDKRPRGDD) show a composition bias toward basic and acidic residues.

Belongs to the mitochondrion-specific ribosomal protein mS46 family. In terms of assembly, component of the mitochondrial small ribosomal subunit (mt-SSU). Mature N.crassa 74S mitochondrial ribosomes consist of a small (37S) and a large (54S) subunit. The 37S small subunit contains a 16S ribosomal RNA (16S mt-rRNA) and 32 different proteins. The 54S large subunit contains a 23S rRNA (23S mt-rRNA) and 42 different proteins.

It localises to the mitochondrion. Functionally, component of the mitochondrial ribosome (mitoribosome), a dedicated translation machinery responsible for the synthesis of mitochondrial genome-encoded proteins, including at least some of the essential transmembrane subunits of the mitochondrial respiratory chain. The mitoribosomes are attached to the mitochondrial inner membrane and translation products are cotranslationally integrated into the membrane. This chain is Small ribosomal subunit protein mS46 (rsm28), found in Neurospora crassa (strain ATCC 24698 / 74-OR23-1A / CBS 708.71 / DSM 1257 / FGSC 987).